We begin with the raw amino-acid sequence, 107 residues long: Quaternary ammonium compound-resistance protein QacG (107 aa).

4 consecutive transmembrane segments (helical) span residues 1–21 (MHYL…SFLK), 26–46 (FTKL…FYFL), 57–77 (ITYA…SVIV), and 84–104 (LISI…NVFG).

It belongs to the drug/metabolite transporter (DMT) superfamily. Small multidrug resistance (SMR) (TC 2.A.7.1) family.

It localises to the cell membrane. Its function is as follows. Multidrug exporter. Is implicated for the resistance to bacteriocidal quaternary ammonium compounds. In Staphylococcus sp. (strain ST94), this protein is Quaternary ammonium compound-resistance protein QacG (qacG).